A 136-amino-acid chain; its full sequence is MMHTTSYRRLSPPHLTDQPSAYSHTHRTFSHFSCGSQPAAQRLHVELWNADLQSEFLCPCLGLTLYLTCNPQLGKRKFCSHSSEDMSKMVSRRNVKDSHEVSGSLQATLQVISFSFPFLLHTCSHPLSHPTSGQRR.

The disordered stretch occupies residues 1 to 22; that stretch reads MMHTTSYRRLSPPHLTDQPSAY.

In terms of tissue distribution, testis specific. Expressed in cancer cell lines.

This is Cancer/testis antigen 62 (CT62) from Homo sapiens (Human).